Reading from the N-terminus, the 248-residue chain is UPF0736 protein BcerKBAB4_1085 (248 aa).

This sequence belongs to the UPF0736 family.

The polypeptide is UPF0736 protein BcerKBAB4_1085 (Bacillus mycoides (strain KBAB4) (Bacillus weihenstephanensis)).